The following is a 238-amino-acid chain: Type III pantothenate kinase (238 aa).

Residue 6-13 (DSGNTRIK) participates in ATP binding. Residues Tyr90 and 97-100 (GVDR) contribute to the substrate site. The active-site Proton acceptor is the Asp99. Residue Thr122 participates in ATP binding. Thr172 is a binding site for substrate.

The protein belongs to the type III pantothenate kinase family. As to quaternary structure, homodimer. NH4(+) serves as cofactor. The cofactor is K(+).

The protein localises to the cytoplasm. It catalyses the reaction (R)-pantothenate + ATP = (R)-4'-phosphopantothenate + ADP + H(+). The protein operates within cofactor biosynthesis; coenzyme A biosynthesis; CoA from (R)-pantothenate: step 1/5. Its function is as follows. Catalyzes the phosphorylation of pantothenate (Pan), the first step in CoA biosynthesis. The protein is Type III pantothenate kinase of Dechloromonas aromatica (strain RCB).